We begin with the raw amino-acid sequence, 303 residues long: MSTVISLPKINGEYRKNFKLSQLTWFKVGGISQVFYKPKDEEDLSCFLKNLQFDIQITVLGAGSNLLIRDNGIDGVTIKLGRSFNEINFVKNNHYNIISVGAGTLNYDVAKFCLQHNLGGLEFLVGIPGTIGGGIAMNAGAYGQEFKDVVYSVEALDRLGNKHIFLSKDLNFEYRQCIVNGFLIFTKTNLICYNDSKTSISQKLQKIQTVRKLTQPINQKTAGSAFRNTNNYKAWQLIDKVGLRGHSIGGAQVSNLHCNFLINNGNATASDIENLGELIRKNVFDHTGITLEWEIKIVGKKSL.

Residues 27 to 207 (KVGGISQVFY…TSISQKLQKI (181 aa)) enclose the FAD-binding PCMH-type domain. Residue arginine 175 is part of the active site. The active-site Proton donor is the serine 224. Residue glutamate 294 is part of the active site.

The protein belongs to the MurB family. FAD is required as a cofactor.

The protein localises to the cytoplasm. The catalysed reaction is UDP-N-acetyl-alpha-D-muramate + NADP(+) = UDP-N-acetyl-3-O-(1-carboxyvinyl)-alpha-D-glucosamine + NADPH + H(+). It participates in cell wall biogenesis; peptidoglycan biosynthesis. Cell wall formation. The protein is UDP-N-acetylenolpyruvoylglucosamine reductase of Orientia tsutsugamushi (strain Boryong) (Rickettsia tsutsugamushi).